A 1463-amino-acid polypeptide reads, in one-letter code: DNA polymerase III PolC-type (1463 aa).

The 157-residue stretch at 425–581 folds into the Exonuclease domain; sequence YVVFDVETTG…YDAEATGRLL (157 aa).

This sequence belongs to the DNA polymerase type-C family. PolC subfamily.

It is found in the cytoplasm. It carries out the reaction DNA(n) + a 2'-deoxyribonucleoside 5'-triphosphate = DNA(n+1) + diphosphate. Functionally, required for replicative DNA synthesis. This DNA polymerase also exhibits 3' to 5' exonuclease activity. The chain is DNA polymerase III PolC-type from Streptococcus pneumoniae serotype 4 (strain ATCC BAA-334 / TIGR4).